The sequence spans 359 residues: Anhydro-N-acetylmuramic acid kinase (359 aa).

12–19 (GTSLDGVD) serves as a coordination point for ATP.

The protein belongs to the anhydro-N-acetylmuramic acid kinase family.

The catalysed reaction is 1,6-anhydro-N-acetyl-beta-muramate + ATP + H2O = N-acetyl-D-muramate 6-phosphate + ADP + H(+). The protein operates within amino-sugar metabolism; 1,6-anhydro-N-acetylmuramate degradation. Its pathway is cell wall biogenesis; peptidoglycan recycling. Catalyzes the specific phosphorylation of 1,6-anhydro-N-acetylmuramic acid (anhMurNAc) with the simultaneous cleavage of the 1,6-anhydro ring, generating MurNAc-6-P. Is required for the utilization of anhMurNAc either imported from the medium or derived from its own cell wall murein, and thus plays a role in cell wall recycling. The sequence is that of Anhydro-N-acetylmuramic acid kinase from Sulfurovum sp. (strain NBC37-1).